A 101-amino-acid polypeptide reads, in one-letter code: Ribonuclease kappa-B (101 aa).

2 helical membrane-spanning segments follow: residues 13–33 and 68–88; these read ACGI…GVFF and VSYN…FSFC.

This sequence belongs to the RNase K family.

Its subcellular location is the membrane. In terms of biological role, endoribonuclease which preferentially cleaves ApU and ApG phosphodiester bonds. This is Ribonuclease kappa-B (rnasek-b) from Xenopus laevis (African clawed frog).